We begin with the raw amino-acid sequence, 73 residues long: Small ribosomal subunit protein bS18 (73 aa).

The protein belongs to the bacterial ribosomal protein bS18 family. As to quaternary structure, part of the 30S ribosomal subunit. Forms a tight heterodimer with protein bS6.

Binds as a heterodimer with protein bS6 to the central domain of the 16S rRNA, where it helps stabilize the platform of the 30S subunit. The sequence is that of Small ribosomal subunit protein bS18 from Synechococcus sp. (strain WH7803).